The chain runs to 282 residues: MNTVLGALNPIALRLGPIQVHWYGVIIASAVVIAVALAVREGQRRGVRPDDIYDMILWALPFTLIAARTYYVIFQWSYYRQNPGEIIRIWDGGIAIYGGLIGAGIVVILFCRSRFIPTWLMLDIAAPTVIMGQGIGRWGNFMNQEAFGRVTSLSFLQGLHLPDWLINQMYIRGAYRQPTFLYESVWDLLGFALLMLTRHRTHWYKQGDVFLTYVAWYAFGRFFTEGMRTDSLMLFNVIRVSQALSVVLFFGSIGLMIWRRHHNPNNRWYLAGSGQKVVAENK.

A run of 3 helical transmembrane segments spans residues Ile-18 to Ala-38, Ile-56 to Trp-76, and Ile-89 to Leu-109. Position 137 (Arg-137) interacts with a 1,2-diacyl-sn-glycero-3-phospho-(1'-sn-glycerol). Residues Val-237–Ile-257 form a helical membrane-spanning segment.

It belongs to the Lgt family.

The protein resides in the cell membrane. The catalysed reaction is L-cysteinyl-[prolipoprotein] + a 1,2-diacyl-sn-glycero-3-phospho-(1'-sn-glycerol) = an S-1,2-diacyl-sn-glyceryl-L-cysteinyl-[prolipoprotein] + sn-glycerol 1-phosphate + H(+). The protein operates within protein modification; lipoprotein biosynthesis (diacylglyceryl transfer). Its function is as follows. Catalyzes the transfer of the diacylglyceryl group from phosphatidylglycerol to the sulfhydryl group of the N-terminal cysteine of a prolipoprotein, the first step in the formation of mature lipoproteins. This is Phosphatidylglycerol--prolipoprotein diacylglyceryl transferase from Lactiplantibacillus plantarum (strain ATCC BAA-793 / NCIMB 8826 / WCFS1) (Lactobacillus plantarum).